Consider the following 138-residue polypeptide: Lymphocyte antigen 6L (138 aa).

An N-terminal signal peptide occupies residues 1–16; that stretch reads MERLVLTLCTLPLAVA. Asn-27 is a glycosylation site (N-linked (GlcNAc...) asparagine). The region spanning 28–122 is the UPAR/Ly6 domain; it reads LSCYQCFKVS…TPQEGRWALR (95 aa). 2 disulfides stabilise this stretch: Cys-30–Cys-47 and Cys-103–Cys-108. A lipid anchor (GPI-anchor amidated glycine) is attached at Gly-117. The propeptide at 118–138 is removed in mature form; that stretch reads RWALRGGLLLQVGLSLLRALL.

Its subcellular location is the cell membrane. This Homo sapiens (Human) protein is Lymphocyte antigen 6L.